Here is a 227-residue protein sequence, read N- to C-terminus: Uracil-DNA glycosylase (227 aa).

Asp-64 serves as the catalytic Proton acceptor.

The protein belongs to the uracil-DNA glycosylase (UDG) superfamily. UNG family.

The protein resides in the cytoplasm. It carries out the reaction Hydrolyzes single-stranded DNA or mismatched double-stranded DNA and polynucleotides, releasing free uracil.. Functionally, excises uracil residues from the DNA which can arise as a result of misincorporation of dUMP residues by DNA polymerase or due to deamination of cytosine. This Sodalis glossinidius (strain morsitans) protein is Uracil-DNA glycosylase.